A 382-amino-acid chain; its full sequence is Alanine racemase (382 aa).

The active-site Proton acceptor; specific for D-alanine is the K39. K39 is subject to N6-(pyridoxal phosphate)lysine. Position 138 (R138) interacts with substrate. Y265 serves as the catalytic Proton acceptor; specific for L-alanine. A substrate-binding site is contributed by M312.

This sequence belongs to the alanine racemase family. Pyridoxal 5'-phosphate is required as a cofactor.

The catalysed reaction is L-alanine = D-alanine. Its pathway is amino-acid biosynthesis; D-alanine biosynthesis; D-alanine from L-alanine: step 1/1. In terms of biological role, catalyzes the interconversion of L-alanine and D-alanine. May also act on other amino acids. The polypeptide is Alanine racemase (alr) (Staphylococcus saprophyticus subsp. saprophyticus (strain ATCC 15305 / DSM 20229 / NCIMB 8711 / NCTC 7292 / S-41)).